The following is a 342-amino-acid chain: Pre-mRNA-splicing factor 18 (342 aa).

Met-1 carries the post-translational modification N-acetylmethionine.

Belongs to the PRP18 family. Heterodimer with PPIH. Interacts with PRPF4 and with the spliceosome. Part of a complex containing U4/U6 snRNPs.

The protein localises to the nucleus speckle. Functionally, participates in the second step of pre-mRNA splicing. The protein is Pre-mRNA-splicing factor 18 (Prpf18) of Mus musculus (Mouse).